The chain runs to 426 residues: Probable alpha-galactosidase B (426 aa).

The first 13 residues, 1–13 (MSRSKTRQGKLPA), serve as a signal peptide directing secretion. Cystine bridges form between cysteine 24–cysteine 56 and cysteine 106–cysteine 136. Aspartate 134 (nucleophile) is an active-site residue. Residues asparagine 141 and asparagine 159 are each glycosylated (N-linked (GlcNAc...) asparagine). Substrate is bound at residue 204–208 (EWGQA). Asparagine 215 is a glycosylation site (N-linked (GlcNAc...) asparagine). Aspartate 226 (proton donor) is an active-site residue. N-linked (GlcNAc...) asparagine glycosylation is present at asparagine 265.

Belongs to the glycosyl hydrolase 27 family.

It is found in the secreted. It carries out the reaction Hydrolysis of terminal, non-reducing alpha-D-galactose residues in alpha-D-galactosides, including galactose oligosaccharides, galactomannans and galactolipids.. In terms of biological role, hydrolyzes a variety of simple alpha-D-galactoside as well as more complex molecules such as oligosaccharides and polysaccharides. This is Probable alpha-galactosidase B (aglB) from Aspergillus fumigatus (strain CBS 144.89 / FGSC A1163 / CEA10) (Neosartorya fumigata).